Consider the following 351-residue polypeptide: MASGRLIKLVIFELLEFAAFSIPTLVIMEQFATAYQRTRNASEKTHYWLIVSCSIAYVAVVSLLIWVPVKVLLHKKRHLYKKIKGWRPVMMMCVVLTTLPSFIFSIAVTEVQKTINTTVDVLPDTLPDLPVSLVISSLIITDIIEKLRFHPIRGYQKSNEDKHIHTSSLQQVRTVTEQVRQNGENAASPCAASPSETWQPPGALTHSAVPMFAGPQEPFFGSGILKTMSRRDVRAEIFLWSFLLWSDTIEMVRVAGHPNVYKTNWLYPVYLFSFISLLRIIFTPQNPLLSCLGILLQDLPFVFVRLSLIIALGTITPVLGLCKNVLVTLSYVYFNFLTRFRAFSNFELSPF.

Helical transmembrane passes span 9-29, 49-69, and 88-108; these read LVIF…VIME, LIVS…WVPV, and PVMM…SIAV. An N-linked (GlcNAc...) asparagine glycan is attached at asparagine 116. The next 3 membrane-spanning stretches (helical) occupy residues 121–141, 264–284, and 301–321; these read VLPD…LIIT, NWLY…IFTP, and FVFV…VLGL.

It belongs to the TMEM236 family. Intestine.

The protein localises to the membrane. This Oryctolagus cuniculus (Rabbit) protein is Transmembrane protein 236 (TMEM236).